Consider the following 260-residue polypeptide: Phosphate import ATP-binding protein PstB 2 (260 aa).

The 247-residue stretch at 9 to 255 (IKVKDLSFYY…PLDSRTRDYV (247 aa)) folds into the ABC transporter domain. An ATP-binding site is contributed by 41 to 48 (GPSGCGKS).

Belongs to the ABC transporter superfamily. Phosphate importer (TC 3.A.1.7) family. In terms of assembly, the complex is composed of two ATP-binding proteins (PstB), two transmembrane proteins (PstC and PstA) and a solute-binding protein (PstS).

It localises to the cell inner membrane. It carries out the reaction phosphate(out) + ATP + H2O = ADP + 2 phosphate(in) + H(+). Functionally, part of the ABC transporter complex PstSACB involved in phosphate import. Responsible for energy coupling to the transport system. The sequence is that of Phosphate import ATP-binding protein PstB 2 from Nostoc sp. (strain PCC 7120 / SAG 25.82 / UTEX 2576).